An 869-amino-acid chain; its full sequence is Ubiquitin carboxyl-terminal hydrolase 29 (869 aa).

Polar residues-rich tracts occupy residues 104–120 and 140–150; these read SSTPCESQQPMEPMSSQ and SLNTTPESGTP. Positions 104–226 are disordered; that stretch reads SSTPCESQQP…KAVTLREQEK (123 aa). Residues 187 to 200 show a composition bias toward basic and acidic residues; sequence VNKDIPKENTPDQK. The segment covering 201 to 212 has biased composition (basic residues); sequence KKSRRYYSRNRG. The span at 213–226 shows a compositional bias: basic and acidic residues; sequence GKAEKAVTLREQEK. The USP domain maps to 289–826; sequence EGFPNLGNTC…SGYIFFYMHN (538 aa). C298 acts as the Nucleophile in catalysis. Residues 723 to 754 are disordered; it reads SQEDPEKDLSRSPELQEDDPHSFAFGSDDSKD. H781 (proton acceptor) is an active-site residue.

This sequence belongs to the peptidase C19 family. As to expression, predominantly expressed in brain and testis. Highest expression levels in adult brain, especially in the cerebral cortex and hippocampus, and in the forebrain, face, and limb buds of midgestation mouse embryos.

The protein localises to the cytoplasm. It localises to the perinuclear region. The catalysed reaction is Thiol-dependent hydrolysis of ester, thioester, amide, peptide and isopeptide bonds formed by the C-terminal Gly of ubiquitin (a 76-residue protein attached to proteins as an intracellular targeting signal).. Functionally, deubiquitinase involved in innate antiviral immunity by mediating 'Lys-48'-linked deubiquitination of CGAS, thereby promoting its stabilization. This Mus musculus (Mouse) protein is Ubiquitin carboxyl-terminal hydrolase 29.